The following is a 594-amino-acid chain: DNA polymerase epsilon subunit B (594 aa).

This sequence belongs to the DNA polymerase epsilon subunit B family. As to quaternary structure, heterotetramer. Consists of four subunits: pol2, dpb2, dpb3 and dpb4. Interacts with dpb3.

It is found in the nucleus. As accessory component of the DNA polymerase epsilon (DNA polymerase II) participates in chromosomal DNA replication. This is DNA polymerase epsilon subunit B (dpb2) from Schizosaccharomyces pombe (strain 972 / ATCC 24843) (Fission yeast).